A 390-amino-acid polypeptide reads, in one-letter code: Cystathionine beta-lyase MetC (390 aa).

Lys200 bears the N6-(pyridoxal phosphate)lysine mark.

The protein belongs to the trans-sulfuration enzymes family. As to quaternary structure, homotetramer. The cofactor is pyridoxal 5'-phosphate.

Its subcellular location is the cytoplasm. It catalyses the reaction L,L-cystathionine + H2O = L-homocysteine + pyruvate + NH4(+). The enzyme catalyses an S-substituted L-cysteine + H2O = a thiol + pyruvate + NH4(+). The protein operates within amino-acid biosynthesis; L-methionine biosynthesis via de novo pathway; L-homocysteine from L-cystathionine: step 1/1. Functionally, catalyzes the transformation of cystathionine into homocysteine. Also exhibits cysteine desulfhydrase activity in vitro, producing sulfide from cysteine. The sequence is that of Cystathionine beta-lyase MetC (metC) from Bacillus subtilis (strain 168).